Consider the following 217-residue polypeptide: MSLGLVGRKVGMTRIFTDDGDSIPVTVLEVGDNRVTQIKTDETDGYTAVQVTFGTRRASRVTKPLAGHLAKAGVEAGEVIKEFRVDAARAAEFQPGANISVDLFEVGQKIDVQGVTIGKGYAGTIKRYNFSSGRASHGNSRSHNVPGSIGMAQDPGRVFPGKRMTGHMGDVTRTVQNLEIAKIDAERKLLLVKGAIPGAKGGQVIVTPAVKARAKKA.

Residues 133–145 (GRASHGNSRSHNV) show a composition bias toward polar residues. A disordered region spans residues 133 to 153 (GRASHGNSRSHNVPGSIGMAQ). N5-methylglutamine is present on Gln153.

Belongs to the universal ribosomal protein uL3 family. In terms of assembly, part of the 50S ribosomal subunit. Forms a cluster with proteins L14 and L19. In terms of processing, methylated by PrmB.

One of the primary rRNA binding proteins, it binds directly near the 3'-end of the 23S rRNA, where it nucleates assembly of the 50S subunit. The chain is Large ribosomal subunit protein uL3 from Ralstonia pickettii (strain 12J).